We begin with the raw amino-acid sequence, 367 residues long: Biotin synthase (367 aa).

The Radical SAM core domain occupies 73–308; sequence CCGNTVDLCS…EQIIRYAGGR (236 aa). Residues Cys91, Cys95, and Cys98 each contribute to the [4Fe-4S] cluster site. [2Fe-2S] cluster is bound by residues Cys136, Cys173, Cys233, and Arg303.

Belongs to the radical SAM superfamily. Biotin synthase family. As to quaternary structure, homodimer. It depends on [4Fe-4S] cluster as a cofactor. [2Fe-2S] cluster serves as cofactor.

It catalyses the reaction (4R,5S)-dethiobiotin + (sulfur carrier)-SH + 2 reduced [2Fe-2S]-[ferredoxin] + 2 S-adenosyl-L-methionine = (sulfur carrier)-H + biotin + 2 5'-deoxyadenosine + 2 L-methionine + 2 oxidized [2Fe-2S]-[ferredoxin]. The protein operates within cofactor biosynthesis; biotin biosynthesis; biotin from 7,8-diaminononanoate: step 2/2. Functionally, catalyzes the conversion of dethiobiotin (DTB) to biotin by the insertion of a sulfur atom into dethiobiotin via a radical-based mechanism. The polypeptide is Biotin synthase (Picosynechococcus sp. (strain ATCC 27264 / PCC 7002 / PR-6) (Agmenellum quadruplicatum)).